A 175-amino-acid chain; its full sequence is NADH-ubiquinone oxidoreductase chain 6 (175 aa).

5 consecutive transmembrane segments (helical) span residues 1–21 (MMYMVFLLSVAFVISFIGFSS), 26–46 (IYGGLGLIVGGGVGCGIVMGL), 47–67 (GGSFLGLMVFLVYLGGMLVVF), 87–107 (VILSALFVGLLVEVAMIVWMI), and 152–172 (WLVILAGWSLFVSIFIVIEIT).

The protein belongs to the complex I subunit 6 family.

It is found in the mitochondrion membrane. The catalysed reaction is a ubiquinone + NADH + 5 H(+)(in) = a ubiquinol + NAD(+) + 4 H(+)(out). Core subunit of the mitochondrial membrane respiratory chain NADH dehydrogenase (Complex I) that is believed to belong to the minimal assembly required for catalysis. Complex I functions in the transfer of electrons from NADH to the respiratory chain. The immediate electron acceptor for the enzyme is believed to be ubiquinone. In Dasypus novemcinctus (Nine-banded armadillo), this protein is NADH-ubiquinone oxidoreductase chain 6 (MT-ND6).